The sequence spans 366 residues: uncharacterized protein (366 aa).

This is an uncharacterized protein from Amazona oratrix (yellow-headed parrot).